Reading from the N-terminus, the 423-residue chain is Histidine--tRNA ligase (423 aa).

Belongs to the class-II aminoacyl-tRNA synthetase family. Homodimer.

It is found in the cytoplasm. It carries out the reaction tRNA(His) + L-histidine + ATP = L-histidyl-tRNA(His) + AMP + diphosphate + H(+). This chain is Histidine--tRNA ligase (hisS), found in Haemophilus influenzae (strain ATCC 51907 / DSM 11121 / KW20 / Rd).